We begin with the raw amino-acid sequence, 3726 residues long: Histone-lysine N-methyltransferase trithorax (3726 aa).

4 disordered regions span residues 1–247, 321–352, 371–429, and 509–624; these read MGRS…ATTS, QLNS…GVGG, NEVA…TAKQ, and AGAS…RSTR. Low complexity-rich tracts occupy residues 31-53 and 71-101; these read PAEP…GSSA and GGAS…STGS. The span at 102-115 shows a compositional bias: gly residues; it reads GSSGSGSTNGGSVN. Over residues 126 to 143 the composition is skewed to basic and acidic residues; it reads LDKEAVTKDQNGDGDKTR. A compositionally biased stretch (low complexity) spans 147–205; that stretch reads SSAPSGKLSAAASGKALSKSSRTFSASTSVTSSGRSSGSSPDGNSGASSDGASSGISCG. Positions 206-215 are enriched in polar residues; sequence KSTAKSTEAS. Positions 222 to 247 are enriched in low complexity; it reads TTGAGTCSSAKSSKASSGTTSEATTS. Composition is skewed to low complexity over residues 384 to 402 and 509 to 525; these read AAAN…GPPA and AGAS…SSSN. The segment covering 553–586 has biased composition (acidic residues); it reads PEDQNNAEDDEMDDDDDDEEAEEDDENEDDNDEA. The span at 587–610 shows a compositional bias: basic and acidic residues; sequence VSEKSAETEKSAGADERDPDEKQL. The segment at residues 759–884 is a DNA-binding region (nuclear receptor); it reads PSACSICSAV…PGMRGEAAAR (126 aa). Disordered regions lie at residues 915 to 937, 981 to 1049, 1115 to 1184, and 1208 to 1231; these read TSVK…PNPL, LTKK…SHGV, VPSA…SSAK, and DIAT…KEHR. Polar residues predominate over residues 918-937; the sequence is KWKSSGDSTSALTSIKPNPL. Over residues 986–1000 the composition is skewed to basic and acidic residues; sequence SKQEKEKVKESEQSE. The segment covering 1031 to 1041 has biased composition (low complexity); that stretch reads PQTSTTTQPSA. Over residues 1123-1132 the composition is skewed to basic and acidic residues; sequence SPEKPTHIVT. Composition is skewed to low complexity over residues 1173–1183 and 1211–1223; these read GTASAAGGSSA and TSSS…NQTQ. PHD-type zinc fingers lie at residues 1266-1347, 1348-1393, and 1421-1482; these read RALC…CTVC, YTCN…CLKC, and GNFC…CARR. One can recognise a Bromo domain in the interval 1496 to 1663; it reads AVMEEFKASL…SEQFPWFQNE (168 aa). Residues 1573–1592 form a disordered region; it reads FKDQQQQQQQRNANMNKPRV. The C2HC pre-PHD-type zinc finger occupies 1734-1774; the sequence is TRMCLFCRKSGEGLSGEEARLLYCGHDCWVHTNCAMWSAEV. The segment at 1795–1842 adopts a PHD-type 4 zinc-finger fold; that stretch reads IKCTVCGNRGATVGCNVRSCGEHYHYPCARSIDCAFLTDKSMYCPAHA. The FYR N-terminal domain maps to 1884 to 1941; sequence RVQFHIGSLEVRQLGAIVPRFSDSYEAVVPINFLCSRLYWSSKEPWKIVEYTVRTTIQ. Disordered stretches follow at residues 1991–2019, 2068–2110, 2283–2302, 2649–2669, 2866–2894, 3029–3096, and 3347–3381; these read GGTD…PQQQ, TQAM…WPAS, CSPT…QGMT, GGGA…LGGT, SNLK…IASK, QHFS…PTPP, and RKEE…IQEP. Over residues 2074-2087 the composition is skewed to low complexity; sequence NQAQNQNQQAGGAN. The segment covering 3032 to 3043 has biased composition (low complexity); that stretch reads STSSSSSSSNCS. Residues 3044–3057 are compositionally biased toward polar residues; the sequence is LPTNVVNPMQQQAP. The 85-residue stretch at 3386-3470 folds into the FYR C-terminal domain; that stretch reads GPHLLYEIQS…EKCSKYTPKY (85 aa). Residues 3588–3704 enclose the SET domain; it reads DYVGVFRSHI…QGEELTYDYK (117 aa). Positions 3598 and 3600 each coordinate S-adenosyl-L-methionine. Cys-3641 carries the S-methylcysteine; by autocatalysis modification. Residues Tyr-3642 and 3665 to 3666 contribute to the S-adenosyl-L-methionine site; that span reads NH. Cys-3668, Cys-3714, Cys-3716, and Cys-3721 together coordinate Zn(2+). Residues 3710–3726 form the Post-SET domain; that stretch reads EKIPCSCGSKRCRKYLN.

This sequence belongs to the class V-like SAM-binding methyltransferase superfamily. Histone-lysine methyltransferase family. TRX/MLL subfamily. In terms of assembly, interacts (via SET domain) with ash1 (via SET domain). Interacts with Nup98. In terms of tissue distribution, maternal isoforms are expressed in syncytial blastoderm, confined to the ventral region fated to become mesoderm. An additional broad domain of expression arises during cellularization and is quickly resolved into four pair-rule-like stripes in the posterior half of the embryo.

It is found in the nucleus. Its subcellular location is the chromosome. The enzyme catalyses L-lysyl(9)-[histone H3] + 3 S-adenosyl-L-methionine = N(6),N(6),N(6)-trimethyl-L-lysyl(9)-[histone H3] + 3 S-adenosyl-L-homocysteine + 3 H(+). It carries out the reaction L-cysteinyl-[protein] + S-adenosyl-L-methionine = S-methyl-L-cysteinyl-[protein] + S-adenosyl-L-homocysteine + H(+). Its function is as follows. Histone methyltransferase that methylates 'Lys-4' of histone H3 (H3K4me). H3K4me represents a specific tag for epigenetic transcriptional activation. Functions in segment determination through interaction with genes of bithorax (BX-C) and antennapedia (ANT-C) complexes. Acts as an activator of BX-C. Involved in the very early regulation of homeotic genes expressed only in the posterior region of the embryo. Also has auto-methylation activity on Cys-3641. This chain is Histone-lysine N-methyltransferase trithorax, found in Drosophila melanogaster (Fruit fly).